The chain runs to 123 residues: Small ribosomal subunit protein uS12cz/uS12cy (123 aa).

It belongs to the universal ribosomal protein uS12 family. In terms of assembly, part of the 30S ribosomal subunit.

It localises to the plastid. It is found in the chloroplast. Its function is as follows. With S4 and S5 plays an important role in translational accuracy. Located at the interface of the 30S and 50S subunits. This chain is Small ribosomal subunit protein uS12cz/uS12cy (rps12-A), found in Atropa belladonna (Belladonna).